The following is a 541-amino-acid chain: Chaperonin GroEL (541 aa).

Residues 29-32 (TLGP), 86-90 (DGTTT), G413, and D495 each bind ATP.

In terms of assembly, forms a cylinder of 14 subunits composed of two heptameric rings stacked back-to-back. Interacts with the co-chaperonin GroES.

Its subcellular location is the cytoplasm. The enzyme catalyses ATP + H2O + a folded polypeptide = ADP + phosphate + an unfolded polypeptide.. Together with its co-chaperonin GroES, plays an essential role in assisting protein folding. The GroEL-GroES system forms a nano-cage that allows encapsulation of the non-native substrate proteins and provides a physical environment optimized to promote and accelerate protein folding. The sequence is that of Chaperonin GroEL from Thermoanaerobacter brockii (Thermoanaerobium brockii).